Here is a 430-residue protein sequence, read N- to C-terminus: MTDTLPSTFTASLAEVDPEIAEVLQLELGRQRDYLEMIASENFVPRAVLESVGSVLTNKYAEGYPGRRYYGGCEYVDIAEQLAIDRAKSLFGAEYANVQPHSGASANAAVLSAIATPGETILGLELAHGGHLTHGMKLNFSGKLYNAVAYGVDPETFLVDMDAVRDRALEHKPQVIIAGWSAYPRQLDFAAFRAIADEVGAKLWVDMAHFAGLVAAGLHPSPVPYADVVSSTVHKTLGGPRSGFIVSRDTELAKKLNSNVFPGQQGGPLMHVIAAKATAFKLAATDEFKDRQARTIRGAQLLAERLTAADSRASGVDVLTGGTDVHLVLADLRTSELDGQQAEDILHEVGITVNRNAVPFDPRPPMVTSGLRIGTPALATRGFGDTEFTEVADIIALALRPGADTRALRARVDALTAAFPLYPGLAPSAS.

(6S)-5,6,7,8-tetrahydrofolate is bound by residues leucine 126 and glycine 130–leucine 132. Residue lysine 235 is modified to N6-(pyridoxal phosphate)lysine.

Belongs to the SHMT family. As to quaternary structure, homodimer. It depends on pyridoxal 5'-phosphate as a cofactor.

The protein localises to the cytoplasm. It carries out the reaction (6R)-5,10-methylene-5,6,7,8-tetrahydrofolate + glycine + H2O = (6S)-5,6,7,8-tetrahydrofolate + L-serine. The protein operates within one-carbon metabolism; tetrahydrofolate interconversion. It functions in the pathway amino-acid biosynthesis; glycine biosynthesis; glycine from L-serine: step 1/1. Catalyzes the reversible interconversion of serine and glycine with tetrahydrofolate (THF) serving as the one-carbon carrier. This reaction serves as the major source of one-carbon groups required for the biosynthesis of purines, thymidylate, methionine, and other important biomolecules. Also exhibits THF-independent aldolase activity toward beta-hydroxyamino acids, producing glycine and aldehydes, via a retro-aldol mechanism. The sequence is that of Serine hydroxymethyltransferase from Leifsonia xyli subsp. xyli (strain CTCB07).